Reading from the N-terminus, the 225-residue chain is NAD(P)H-quinone oxidoreductase subunit K, chloroplastic (225 aa).

Residues C43, C44, C108, and C139 each coordinate [4Fe-4S] cluster.

This sequence belongs to the complex I 20 kDa subunit family. As to quaternary structure, NDH is composed of at least 16 different subunits, 5 of which are encoded in the nucleus. Requires [4Fe-4S] cluster as cofactor.

The protein localises to the plastid. The protein resides in the chloroplast thylakoid membrane. It carries out the reaction a plastoquinone + NADH + (n+1) H(+)(in) = a plastoquinol + NAD(+) + n H(+)(out). The enzyme catalyses a plastoquinone + NADPH + (n+1) H(+)(in) = a plastoquinol + NADP(+) + n H(+)(out). In terms of biological role, NDH shuttles electrons from NAD(P)H:plastoquinone, via FMN and iron-sulfur (Fe-S) centers, to quinones in the photosynthetic chain and possibly in a chloroplast respiratory chain. The immediate electron acceptor for the enzyme in this species is believed to be plastoquinone. Couples the redox reaction to proton translocation, and thus conserves the redox energy in a proton gradient. In Populus trichocarpa (Western balsam poplar), this protein is NAD(P)H-quinone oxidoreductase subunit K, chloroplastic.